The sequence spans 533 residues: Subtilisin-like serine protease pepC (533 aa).

A signal peptide spans 1-16 (MKGILGLSLLPLLTAA). In terms of domain architecture, Inhibitor I9 spans 43-136 (SYIVVFKKHV…IERDSEVHTM (94 aa)). In terms of domain architecture, Peptidase S8 spans 145-450 (PWGLARISHR…VGIYKRNELT (306 aa)). Catalysis depends on charge relay system residues Asp-181 and His-213. A glycan (N-linked (GlcNAc...) asparagine) is linked at Asn-283. An intrachain disulfide couples Cys-320 to Cys-351. Catalysis depends on Ser-379, which acts as the Charge relay system. N-linked (GlcNAc...) asparagine glycosylation is present at Asn-435. Residues 496–513 (KSCSPRSLVPSTARSRMP) are compositionally biased toward polar residues. The interval 496–519 (KSCSPRSLVPSTARSRMPSSHRSE) is disordered.

Belongs to the peptidase S8 family.

The polypeptide is Subtilisin-like serine protease pepC (pepC) (Aspergillus niger).